Here is a 320-residue protein sequence, read N- to C-terminus: o-succinylbenzoate synthase (320 aa).

The Proton donor role is filled by K133. D161, E190, and D213 together coordinate Mg(2+). Residue K235 is the Proton acceptor of the active site.

The protein belongs to the mandelate racemase/muconate lactonizing enzyme family. MenC type 1 subfamily. The cofactor is a divalent metal cation.

The enzyme catalyses (1R,6R)-6-hydroxy-2-succinyl-cyclohexa-2,4-diene-1-carboxylate = 2-succinylbenzoate + H2O. It functions in the pathway quinol/quinone metabolism; 1,4-dihydroxy-2-naphthoate biosynthesis; 1,4-dihydroxy-2-naphthoate from chorismate: step 4/7. The protein operates within quinol/quinone metabolism; menaquinone biosynthesis. Converts 2-succinyl-6-hydroxy-2,4-cyclohexadiene-1-carboxylate (SHCHC) to 2-succinylbenzoate (OSB). This is o-succinylbenzoate synthase from Escherichia coli O127:H6 (strain E2348/69 / EPEC).